A 447-amino-acid chain; its full sequence is Putative branched-chain amino acid carrier protein SERP0977 (447 aa).

Helical transmembrane passes span T5 to P25, I40 to L60, P74 to I94, G114 to L134, I143 to F163, G193 to I213, I229 to I249, L290 to V310, I317 to L337, V350 to A370, I382 to I402, and L417 to V437.

It belongs to the branched chain amino acid transporter family.

The protein resides in the cell membrane. In terms of biological role, component of the transport system for branched-chain amino acids (leucine, isoleucine and valine), which is coupled to a proton motive force. This Staphylococcus epidermidis (strain ATCC 35984 / DSM 28319 / BCRC 17069 / CCUG 31568 / BM 3577 / RP62A) protein is Putative branched-chain amino acid carrier protein SERP0977.